Consider the following 61-residue polypeptide: Small ribosomal subunit protein uS14 (61 aa).

Positions 24, 27, 40, and 43 each coordinate Zn(2+).

The protein belongs to the universal ribosomal protein uS14 family. Zinc-binding uS14 subfamily. Part of the 30S ribosomal subunit. Contacts proteins S3 and S10. It depends on Zn(2+) as a cofactor.

Functionally, binds 16S rRNA, required for the assembly of 30S particles and may also be responsible for determining the conformation of the 16S rRNA at the A site. The chain is Small ribosomal subunit protein uS14 from Frankia casuarinae (strain DSM 45818 / CECT 9043 / HFP020203 / CcI3).